Reading from the N-terminus, the 783-residue chain is LPS-assembly protein LptD (783 aa).

An N-terminal signal peptide occupies residues 1 to 24; sequence MKKNYYSLISFSIFTALYSTAGFA.

The protein belongs to the LptD family. In terms of assembly, component of the lipopolysaccharide transport and assembly complex. Interacts with LptE and LptA.

It localises to the cell outer membrane. Functionally, together with LptE, is involved in the assembly of lipopolysaccharide (LPS) at the surface of the outer membrane. The chain is LPS-assembly protein LptD from Mannheimia succiniciproducens (strain KCTC 0769BP / MBEL55E).